The sequence spans 328 residues: Tetraacyldisaccharide 4'-kinase (328 aa).

52-59 is an ATP binding site; that stretch reads NAGGTGKT.

This sequence belongs to the LpxK family.

The catalysed reaction is a lipid A disaccharide + ATP = a lipid IVA + ADP + H(+). Its pathway is glycolipid biosynthesis; lipid IV(A) biosynthesis; lipid IV(A) from (3R)-3-hydroxytetradecanoyl-[acyl-carrier-protein] and UDP-N-acetyl-alpha-D-glucosamine: step 6/6. Its function is as follows. Transfers the gamma-phosphate of ATP to the 4'-position of a tetraacyldisaccharide 1-phosphate intermediate (termed DS-1-P) to form tetraacyldisaccharide 1,4'-bis-phosphate (lipid IVA). This chain is Tetraacyldisaccharide 4'-kinase, found in Jannaschia sp. (strain CCS1).